We begin with the raw amino-acid sequence, 126 residues long: UPF0235 protein C15orf40 homolog (126 aa).

Positions 1 to 32 are disordered; it reads MPKKAGATSKGKNQTKEPETAPPAAGPVATDP. Ser-89 is modified (phosphoserine).

Belongs to the UPF0235 family.

This is UPF0235 protein C15orf40 homolog from Mus musculus (Mouse).